The chain runs to 355 residues: 3-dehydroquinate synthase (355 aa).

Residues 71–76 (EGEERK), 105–109 (GVVGD), 129–130 (TS), K142, and K151 each bind NAD(+). The Zn(2+) site is built by E184, H246, and H263.

It belongs to the sugar phosphate cyclases superfamily. Dehydroquinate synthase family. Co(2+) is required as a cofactor. The cofactor is Zn(2+). Requires NAD(+) as cofactor.

It is found in the cytoplasm. The catalysed reaction is 7-phospho-2-dehydro-3-deoxy-D-arabino-heptonate = 3-dehydroquinate + phosphate. The protein operates within metabolic intermediate biosynthesis; chorismate biosynthesis; chorismate from D-erythrose 4-phosphate and phosphoenolpyruvate: step 2/7. Catalyzes the conversion of 3-deoxy-D-arabino-heptulosonate 7-phosphate (DAHP) to dehydroquinate (DHQ). The protein is 3-dehydroquinate synthase of Streptococcus pneumoniae (strain ATCC 700669 / Spain 23F-1).